A 405-amino-acid chain; its full sequence is Peroxisomal membrane protein PEX13 (405 aa).

Pro residues predominate over residues 1–11 (MASQPPPPPKP). The disordered stretch occupies residues 1–71 (MASQPPPPPK…SQQTGSNNVN (71 aa)). Residues 1–136 (MASQPPPPPK…SSRGAFQSIE (136 aa)) are Peroxisomal matrix-facing. Residues 61–71 (PSQQTGSNNVN) show a composition bias toward polar residues. Residues 137 to 157 (SIVHAFASVSMMMDATFSAVY) form a helical membrane-spanning segment. The segment at 147-235 (MMMDATFSAV…EDQATNSAKS (89 aa)) is targeting to peroxisomes. Residues 158 to 176 (NSFRAVLDVANHFSRLKIH) lie on the Cytoplasmic side of the membrane. Residues 177 to 194 (FTKVFSAFALVRTIRYLY) form a helical membrane-spanning segment. The segment at 177–198 (FTKVFSAFALVRTIRYLYRRLQ) is interaction with PEX19. The Peroxisomal matrix portion of the chain corresponds to 195–235 (RRLQWMMGLRRGSENEDLWAESEGTVACLSAEDQATNSAKS). Residues 236–256 (WPIFLFFAVILGGPYLIWKLL) form a helical membrane-spanning segment. Residues 257–405 (STHNDEVTDN…TGKNGDKQDL (149 aa)) lie on the Cytoplasmic side of the membrane. Residues 274–338 (DDHVVARAEY…PANYVKILGK (65 aa)) form the SH3 domain. Residue S356 is modified to Phosphoserine.

The protein belongs to the peroxin-13 family. Interacts (via SH3 domain) with PEX14 (via SH3-binding motif); forming the PEX13-PEX14 docking complex. Interacts with PEX19.

The protein localises to the peroxisome membrane. In terms of biological role, component of the PEX13-PEX14 docking complex, a translocon channel that specifically mediates the import of peroxisomal cargo proteins bound to PEX5 receptor. The PEX13-PEX14 docking complex forms a large import pore which can be opened to a diameter of about 9 nm. Mechanistically, PEX5 receptor along with cargo proteins associates with the PEX14 subunit of the PEX13-PEX14 docking complex in the cytosol, leading to the insertion of the receptor into the organelle membrane with the concomitant translocation of the cargo into the peroxisome matrix. Involved in the import of PTS1- and PTS2-type containing proteins. The protein is Peroxisomal membrane protein PEX13 of Mus musculus (Mouse).